A 165-amino-acid polypeptide reads, in one-letter code: Regulator of sigma D (165 aa).

Belongs to the Rsd/AlgQ family. In terms of assembly, interacts with RpoD.

It localises to the cytoplasm. Functionally, binds RpoD and negatively regulates RpoD-mediated transcription activation by preventing the interaction between the primary sigma factor RpoD with the catalytic core of the RNA polymerase and with promoter DNA. May be involved in replacement of the RNA polymerase sigma subunit from RpoD to RpoS during the transition from exponential growth to the stationary phase. This is Regulator of sigma D from Enterobacter sp. (strain 638).